The chain runs to 376 residues: Alanine racemase (376 aa).

Residue Lys-40 is the Proton acceptor; specific for D-alanine of the active site. The residue at position 40 (Lys-40) is an N6-(pyridoxal phosphate)lysine. Arg-138 contacts substrate. Residue Tyr-270 is the Proton acceptor; specific for L-alanine of the active site. Met-317 provides a ligand contact to substrate.

Belongs to the alanine racemase family. Pyridoxal 5'-phosphate serves as cofactor.

The catalysed reaction is L-alanine = D-alanine. Its pathway is amino-acid biosynthesis; D-alanine biosynthesis; D-alanine from L-alanine: step 1/1. Functionally, catalyzes the interconversion of L-alanine and D-alanine. May also act on other amino acids. In Lactobacillus delbrueckii subsp. bulgaricus (strain ATCC 11842 / DSM 20081 / BCRC 10696 / JCM 1002 / NBRC 13953 / NCIMB 11778 / NCTC 12712 / WDCM 00102 / Lb 14), this protein is Alanine racemase (alr).